The following is an 82-amino-acid chain: Immediate early response 3-interacting protein 1 (82 aa).

2 helical membrane-spanning segments follow: residues 2 to 22 and 62 to 82; these read AFTL…IAVL and VMRV…LLFG.

Belongs to the YOS1 family.

Its subcellular location is the endoplasmic reticulum membrane. Regulator of endoplasmic reticulum secretion that acts as a key determinant of brain size. Required for secretion of extracellular matrix proteins. Required for correct brain development by depositing sufficient extracellular matrix proteins for tissue integrity and the proliferation of neural progenitors. Acts as a regulator of the unfolded protein response (UPR). The polypeptide is Immediate early response 3-interacting protein 1 (Mus musculus (Mouse)).